The chain runs to 67 residues: Protein AaeX (67 aa).

The next 2 helical transmembrane spans lie at 3–23 (VLPV…ELII) and 43–63 (LVWH…YLVS).

This sequence belongs to the AaeX family.

It is found in the cell membrane. The polypeptide is Protein AaeX (Pantoea vagans (strain C9-1) (Pantoea agglomerans (strain C9-1))).